Consider the following 356-residue polypeptide: Histidinol-phosphate aminotransferase (356 aa).

At K214 the chain carries N6-(pyridoxal phosphate)lysine.

It belongs to the class-II pyridoxal-phosphate-dependent aminotransferase family. Histidinol-phosphate aminotransferase subfamily. In terms of assembly, homodimer. The cofactor is pyridoxal 5'-phosphate.

The catalysed reaction is L-histidinol phosphate + 2-oxoglutarate = 3-(imidazol-4-yl)-2-oxopropyl phosphate + L-glutamate. It functions in the pathway amino-acid biosynthesis; L-histidine biosynthesis; L-histidine from 5-phospho-alpha-D-ribose 1-diphosphate: step 7/9. This is Histidinol-phosphate aminotransferase from Escherichia coli O6:K15:H31 (strain 536 / UPEC).